The chain runs to 329 residues: Ketol-acid reductoisomerase (NADP(+)) (329 aa).

In terms of domain architecture, KARI N-terminal Rossmann spans 1-181 (MKIYYDQDAD…GGTRGGVLTT (181 aa)). NADP(+)-binding positions include 24 to 27 (YGSQ), R47, and 82 to 85 (DQHQ). The active site involves H107. G133 serves as a coordination point for NADP(+). Positions 182 to 327 (TFKEETETDL…AKLRGMMSWL (146 aa)) constitute a KARI C-terminal knotted domain. 4 residues coordinate Mg(2+): D190, E194, E226, and E230. S251 provides a ligand contact to substrate.

It belongs to the ketol-acid reductoisomerase family. It depends on Mg(2+) as a cofactor.

The enzyme catalyses (2R)-2,3-dihydroxy-3-methylbutanoate + NADP(+) = (2S)-2-acetolactate + NADPH + H(+). It carries out the reaction (2R,3R)-2,3-dihydroxy-3-methylpentanoate + NADP(+) = (S)-2-ethyl-2-hydroxy-3-oxobutanoate + NADPH + H(+). It functions in the pathway amino-acid biosynthesis; L-isoleucine biosynthesis; L-isoleucine from 2-oxobutanoate: step 2/4. It participates in amino-acid biosynthesis; L-valine biosynthesis; L-valine from pyruvate: step 2/4. Functionally, involved in the biosynthesis of branched-chain amino acids (BCAA). Catalyzes an alkyl-migration followed by a ketol-acid reduction of (S)-2-acetolactate (S2AL) to yield (R)-2,3-dihydroxy-isovalerate. In the isomerase reaction, S2AL is rearranged via a Mg-dependent methyl migration to produce 3-hydroxy-3-methyl-2-ketobutyrate (HMKB). In the reductase reaction, this 2-ketoacid undergoes a metal-dependent reduction by NADPH to yield (R)-2,3-dihydroxy-isovalerate. The polypeptide is Ketol-acid reductoisomerase (NADP(+)) (Solidesulfovibrio magneticus (strain ATCC 700980 / DSM 13731 / RS-1) (Desulfovibrio magneticus)).